Here is a 340-residue protein sequence, read N- to C-terminus: Guanine nucleotide-binding protein G(I)/G(S)/G(T) subunit beta-1 (340 aa).

The residue at position 2 (Ser-2) is an N-acetylserine. Ser-2 is subject to Phosphoserine. 7 WD repeats span residues Arg-46–Pro-94, Leu-95–Ala-140, Gly-141–Thr-181, Gly-182–Thr-223, Gly-224–Asp-267, Asn-268–Ala-309, and Gly-310–Asn-340. His-266 bears the Phosphohistidine mark.

The protein belongs to the WD repeat G protein beta family. As to quaternary structure, g proteins are composed of 3 units, alpha, beta and gamma. The heterodimer formed by GNB1 and GNG2 interacts with ARHGEF5. The heterodimer formed by GNB1 and GNG2 interacts with GRK2. Forms a complex with GNAO1 and GNG3. Interacts with ARHGEF18 and RASD2. Forms complexes with TAS2R14 and G-proteins; these complexes play a role in the perception of bitterness. Component of the TAS2R14-GNAI1 complex, consisting of TAS2R14, GNAI1, GNB1 and GNG2. Component of the TAS2R14-GNAT3 complex, consisting of TAS2R14, GNAT3, GNB1 and GNG2. Component of the TAS2R14-GNAS2 complex, consisting of TAS2R14, GNAS2, GNB1 and GNG2. Phosphorylation at His-266 by NDKB contributes to G protein activation by increasing the high energetic phosphate transfer onto GDP.

Guanine nucleotide-binding proteins (G proteins) are involved as a modulator or transducer in various transmembrane signaling systems. The beta and gamma chains are required for the GTPase activity, for replacement of GDP by GTP, and for G protein-effector interaction. This is Guanine nucleotide-binding protein G(I)/G(S)/G(T) subunit beta-1 (GNB1) from Pongo abelii (Sumatran orangutan).